We begin with the raw amino-acid sequence, 261 residues long: MRFLFAFILLCSPWVSEASQNIVTVKTIHEVASDILYDNTNYWLILDIDDVLFEGAEALSHSSWFERSIQGMRALGASEKEAWEAIYPEWLAIQHQGSIKQIETAIPLLITKVQNQDKIVFAYSERQLCAQNVTFEQLATINLSFDKPNLPYASLPPSISFTKGVLFGAEIHKGLGLQLFLDAQPDLPEKIIYIDNEKYNVMRVGEVCNQKNIPYLGIIYTAPKYLSPTYLPDIAKVQYLFRQKLLSNEAAALLLRHRLDK.

The signal sequence occupies residues 1-17 (MRFLFAFILLCSPWVSE).

The protein resides in the cell outer membrane. In Chlamydia muridarum (strain MoPn / Nigg), this protein is Putative outer membrane protein TC_0650.